The sequence spans 928 residues: Zinc metalloproteinase nas-39 (928 aa).

The signal sequence occupies residues 1–30; it reads MRFSANIAIIVNIIFLFIVVEFVLPTFIRS. The Peptidase M12A domain maps to 48–247; sequence AATAKKERIW…RQTKKLYKCA (200 aa). 2 N-linked (GlcNAc...) asparagine glycosylation sites follow: asparagine 69 and asparagine 87. Intrachain disulfides connect cysteine 90–cysteine 246, cysteine 111–cysteine 133, cysteine 113–cysteine 114, and cysteine 249–cysteine 268. Position 141 (histidine 141) interacts with Zn(2+). Glutamate 142 is a catalytic residue. 2 residues coordinate Zn(2+): histidine 145 and histidine 151. 2 CUB domains span residues 249–359 and 360–476; these read CGGT…YAIC and GGPI…FTKE. N-linked (GlcNAc...) asparagine glycosylation occurs at asparagine 283. Disulfide bonds link cysteine 359–cysteine 385, cysteine 412–cysteine 439, cysteine 480–cysteine 491, cysteine 487–cysteine 500, cysteine 502–cysteine 515, and cysteine 519–cysteine 545. Positions 477-516 constitute an EGF-like 1; calcium-binding domain; sequence LNECATDKNICHHYCVNTVGGFKCACRVGYSLSSNGFSCD. Positions 519-625 constitute a CUB 3 domain; sequence CGGYLKASNG…DGFFANFIAD (107 aa). 2 N-linked (GlcNAc...) asparagine glycosylation sites follow: asparagine 527 and asparagine 560. 8 cysteine pairs are disulfide-bonded: cysteine 573/cysteine 587, cysteine 629/cysteine 640, cysteine 636/cysteine 649, cysteine 651/cysteine 664, cysteine 669/cysteine 695, cysteine 722/cysteine 744, cysteine 782/cysteine 812, and cysteine 840/cysteine 863. The 40-residue stretch at 626–665 folds into the EGF-like 2; calcium-binding domain; it reads FDECQNDNAGCEHTCQNRLGSYVCTCNPGYILAEDKHNCK. CUB domains lie at 669 to 781 and 782 to 900; these read CFFE…YTSL and CGGR…YREA. Asparagine 694 carries an N-linked (GlcNAc...) asparagine glycan. The interval 895–928 is disordered; it reads AEYREAPRSSSTKRTFVSKTRHSPLEEPIHDRNE. Positions 902–912 are enriched in polar residues; that stretch reads RSSSTKRTFVS. A compositionally biased stretch (basic and acidic residues) spans 917 to 928; sequence SPLEEPIHDRNE.

The cofactor is Zn(2+). In terms of tissue distribution, expressed in pharyngeal, vulva and body wall muscles, intestine and several neurons.

The protein localises to the secreted. Its function is as follows. Metalloprotease. This chain is Zinc metalloproteinase nas-39, found in Caenorhabditis elegans.